Reading from the N-terminus, the 619-residue chain is Telomere repeat-binding protein 3 (619 aa).

Residues 324-403 (VKLSIKSFRI…LDNLGFTLEP (80 aa)) enclose the Ubiquitin-like domain. The HTH myb-type domain occupies 504 to 563 (AQRRTRRPFSVTEVEALVQAVEELGTGRWRDVKLRAFEDADHRTYVDLKDKWKTLVHTAS). Positions 532 to 559 (WRDVKLRAFEDADHRTYVDLKDKWKTLV) form a DNA-binding region, H-T-H motif. The interval 593–619 (QGKHQARGASKDPDMNRGGAFESGVSV) is disordered.

Homodimer and heterodimer with TRP1. Expressed ubiquitously. Highest expression in flowers and roots.

The protein resides in the nucleus. Functionally, binds specifically to the plant telomeric double-stranded DNA sequences. At least 2 repeats of telomeric sequences are required for binding. Induces DNA bending. The sequence is that of Telomere repeat-binding protein 3 (TRP3) from Arabidopsis thaliana (Mouse-ear cress).